The primary structure comprises 149 residues: UPF0310 protein msl3206 (149 aa).

Belongs to the UPF0310 family.

The polypeptide is UPF0310 protein msl3206 (Mesorhizobium japonicum (strain LMG 29417 / CECT 9101 / MAFF 303099) (Mesorhizobium loti (strain MAFF 303099))).